Consider the following 589-residue polypeptide: MGKSEKTSLGRSLVKHHNHMIQESKDKGKYYKNLQKKVLESVTEVSDIDAIIEQAEEAERLYTINHSSSTPLSINLDTNSSSSVIAAEEWREQQKIEEALHASSLQVPRRPPWTPEMSVEELDANEKQAFLNWRRMLVSLEENEKLVLTPFEKNLDIWRQLWRVLERSDLIVMVVDARDPLFYRCPDLEAYAQEIDEHKKIMLLVNKADLLPTDVREKWAEYFRLNNILFVFWSAIAATATLEGKVLKEQWRQPDNLQKTDDPDIMIYGRDELLSRLQFEAQEIVKVRNSRAASVSSQSWTGEYQRDQAVVGFVGYPNVGKSSTINALVGQKRTGVTSTPGKTKHFQTLIISDELMLCDCPGLVFPSFSSSRYEMIASGVLPIDRMTEHREAIQVVADKVPRRVIESVYNISLPKPKTYERQSRPPHAAELLKSYCASRGYVASSGLPDETKAARLILKDYIGGKLPHYAMPPGMPQADEPDIEDTQELEDILEGSESDDSAVGDETENEQVPGIDDVLDDLSSFDLANGLKSSKKVTAKKQTASHKQHKKPQRKKDRTWRVQNTEDGDGMPSVKVFQKPANTGPLTMR.

The disordered stretch occupies residues 1–26 (MGKSEKTSLGRSLVKHHNHMIQESKD). The CP-type G domain maps to 158–366 (WRQLWRVLER…LCDCPGLVFP (209 aa)). Residues 176-180 (DARDP) carry the DARXP motif motif. Positions 206 to 209 (NKAD) are G4. GTP is bound at residue 206–209 (NKAD). The segment at 237–239 (AAT) is G5. Positions 315 to 322 (GYPNVGKS) are G1. 318–323 (NVGKSS) provides a ligand contact to GTP. Residues 341–345 (GKTKH) are G2. Residues 359–362 (DCPG) are G3. Glycine 362 is a binding site for GTP. Positions 495–509 (GSESDDSAVGDETEN) are enriched in acidic residues. Disordered stretches follow at residues 495–515 (GSES…VPGI) and 534–589 (SKKV…LTMR). A Nuclear localization signal motif is present at residues 534–541 (SKKVTAKK). The span at 534-558 (SKKVTAKKQTASHKQHKKPQRKKDR) shows a compositional bias: basic residues. The span at 580–589 (PANTGPLTMR) shows a compositional bias: polar residues.

This sequence belongs to the TRAFAC class YlqF/YawG GTPase family. Ubiquitous, with the highest expression in reproductive and strongly dividing tissues.

It localises to the cytoplasm. The protein localises to the nucleus. GTPase involved in ribosome biogenesis. Binds to 23S rRNA and associates with 60S pre-ribosomes. Involved in early cotyledon and leaf development. This is GTPase LSG1-2 from Arabidopsis thaliana (Mouse-ear cress).